Reading from the N-terminus, the 172-residue chain is Transcriptional repressor NrdR (172 aa).

A zinc finger spans residues 3-34 (CPFCRHPDSRVVDSRTTDDGTSIRRRRQCPDC). The ATP-cone domain occupies 46–136 (LMVIKRSGVT…VYRAFDSLED (91 aa)). Residues 152 to 172 (ERSGGGTCGTGTVPVPAGTAD) are disordered. Over residues 161–172 (TGTVPVPAGTAD) the composition is skewed to low complexity.

This sequence belongs to the NrdR family. Requires Zn(2+) as cofactor.

Negatively regulates transcription of bacterial ribonucleotide reductase nrd genes and operons by binding to NrdR-boxes. This chain is Transcriptional repressor NrdR, found in Streptomyces clavuligerus.